Here is a 129-residue protein sequence, read N- to C-terminus: Probable cytochrome b5 2 (129 aa).

Residues 3–79 form the Cytochrome b5 heme-binding domain; sequence EKTITVEEVL…LEKFYIGNLL (77 aa). Residues histidine 38 and histidine 62 each contribute to the heme site. Residues 105 to 125 form a helical membrane-spanning segment; the sequence is VKPAMWLFVLVMVVAYFAFRK.

Belongs to the cytochrome b5 family.

It localises to the endoplasmic reticulum membrane. The protein localises to the microsome membrane. The protein resides in the mitochondrion. In terms of biological role, membrane bound hemoprotein which function as an electron carrier for several membrane bound oxygenases. The polypeptide is Probable cytochrome b5 2 (oca8) (Schizosaccharomyces pombe (strain 972 / ATCC 24843) (Fission yeast)).